Reading from the N-terminus, the 488-residue chain is Probable 26S proteasome non-ATPase regulatory subunit 3 (488 aa).

Positions 1-20 (MTQDVEMKEQAAPPSNSLSS) are disordered. In terms of domain architecture, PCI spans 240–421 (SRYLFYLGKI…GWMVSKETGD (182 aa)). The disordered stretch occupies residues 452-488 (FPPNSHKEKESAEKRRERQQQEQELAKHIAEEDDDDF). Residues 456–481 (SHKEKESAEKRRERQQQEQELAKHIA) show a composition bias toward basic and acidic residues.

It belongs to the proteasome subunit S3 family. In terms of assembly, the 26S proteasome is composed of a core protease, known as the 20S proteasome, capped at one or both ends by the 19S regulatory complex (RC). The RC is composed of at least 18 different subunits in two subcomplexes, the base and the lid, which form the portions proximal and distal to the 20S proteolytic core, respectively.

The protein localises to the nucleus. In terms of biological role, acts as a regulatory subunit of the 26 proteasome which is involved in the ATP-dependent degradation of ubiquitinated proteins. The protein is Probable 26S proteasome non-ATPase regulatory subunit 3 (21D7) of Nicotiana tabacum (Common tobacco).